The chain runs to 1035 residues: Beta-galactosidase (1035 aa).

Substrate contacts are provided by asparagine 101 and aspartate 199. Aspartate 199 lines the Na(+) pocket. Residues glutamate 415, histidine 417, and glutamate 460 each contribute to the Mg(2+) site. Substrate contacts are provided by residues glutamate 460 and 540-543 (EYAH). The active-site Proton donor is the glutamate 460. The active-site Nucleophile is glutamate 540. Asparagine 600 is a Mg(2+) binding site. Positions 604 and 607 each coordinate Na(+). Substrate is bound by residues asparagine 607 and tryptophan 1011.

It belongs to the glycosyl hydrolase 2 family. In terms of assembly, homotetramer. The cofactor is Mg(2+). Na(+) is required as a cofactor.

The catalysed reaction is Hydrolysis of terminal non-reducing beta-D-galactose residues in beta-D-galactosides.. This is Beta-galactosidase from Psychromonas ingrahamii (strain DSM 17664 / CCUG 51855 / 37).